Reading from the N-terminus, the 395-residue chain is General transcription factor IIH subunit 2-like protein (395 aa).

Residues 60–236 form the VWFA domain; the sequence is HLYVVVDGSR…HYKELLTHHL (177 aa). Residue Y95 is modified to Phosphotyrosine. The segment at 291-308 adopts a C4-type zinc-finger fold; the sequence is CPQCRAKYCELPVECKIC.

It belongs to the GTF2H2 family.

It localises to the nucleus. Functionally, component of the core-TFIIH basal transcription factor involved in nucleotide excision repair (NER) of DNA and, when complexed to CAK, in RNA transcription by RNA polymerase II. The protein is General transcription factor IIH subunit 2-like protein (GTF2H2C) of Homo sapiens (Human).